Here is a 1004-residue protein sequence, read N- to C-terminus: 2-oxoglutarate dehydrogenase E1 component (1004 aa).

This sequence belongs to the alpha-ketoglutarate dehydrogenase family. Homodimer. Part of the 2-oxoglutarate dehydrogenase (OGDH) complex composed of E1 (2-oxoglutarate dehydrogenase), E2 (dihydrolipoamide succinyltransferase) and E3 (dihydrolipoamide dehydrogenase); the complex contains multiple copies of the three enzymatic components (E1, E2 and E3). It depends on thiamine diphosphate as a cofactor.

It catalyses the reaction N(6)-[(R)-lipoyl]-L-lysyl-[protein] + 2-oxoglutarate + H(+) = N(6)-[(R)-S(8)-succinyldihydrolipoyl]-L-lysyl-[protein] + CO2. E1 component of the 2-oxoglutarate dehydrogenase (OGDH) complex which catalyzes the decarboxylation of 2-oxoglutarate, the first step in the conversion of 2-oxoglutarate to succinyl-CoA and CO(2). This chain is 2-oxoglutarate dehydrogenase E1 component, found in Brucella melitensis biotype 2 (strain ATCC 23457).